The following is a 425-amino-acid chain: GTPase Obg (425 aa).

Residues 1–158 (MFVDVARIYV…RWLLLELKVV (158 aa)) form the Obg domain. The OBG-type G domain maps to 159–330 (ADVGLVGFPN…LLEAAYDLIR (172 aa)). GTP is bound by residues 165–172 (GFPNAGKS), 190–194 (FTTLT), 212–215 (DIPG), 282–285 (NKMD), and 311–313 (SGA). Ser172 and Thr192 together coordinate Mg(2+). An OCT domain is found at 345-422 (VYRPKEEGWR…VCDIEFELMA (78 aa)).

Belongs to the TRAFAC class OBG-HflX-like GTPase superfamily. OBG GTPase family. In terms of assembly, monomer. It depends on Mg(2+) as a cofactor.

It localises to the cytoplasm. An essential GTPase which binds GTP, GDP and possibly (p)ppGpp with moderate affinity, with high nucleotide exchange rates and a fairly low GTP hydrolysis rate. Plays a role in control of the cell cycle, stress response, ribosome biogenesis and in those bacteria that undergo differentiation, in morphogenesis control. The sequence is that of GTPase Obg from Symbiobacterium thermophilum (strain DSM 24528 / JCM 14929 / IAM 14863 / T).